The primary structure comprises 164 residues: Large ribosomal subunit protein uL15 (164 aa).

2 disordered regions span residues 1-49 (MTKL…SIAG) and 143-164 (EKAGGKLTTTKPEAAQDASAEA). Gly residues predominate over residues 22–36 (RGPGSGKGKTAGRGV).

It belongs to the universal ribosomal protein uL15 family. Part of the 50S ribosomal subunit.

In terms of biological role, binds to the 23S rRNA. This is Large ribosomal subunit protein uL15 from Phenylobacterium zucineum (strain HLK1).